An 80-amino-acid polypeptide reads, in one-letter code: Small ribosomal subunit protein bS16 (80 aa).

It belongs to the bacterial ribosomal protein bS16 family.

In Acholeplasma laidlawii (strain PG-8A), this protein is Small ribosomal subunit protein bS16.